Here is a 29-residue protein sequence, read N- to C-terminus: Cyclotide vibi-A (29 aa).

Positions 1–29 (GLPVCGETCFGGTCNTPGCSCSYPICTRN) form a cross-link, cyclopeptide (Gly-Asn). Cystine bridges form between cysteine 5–cysteine 19, cysteine 9–cysteine 21, and cysteine 14–cysteine 26.

This is a cyclic peptide.

Probably participates in a plant defense mechanism. This is Cyclotide vibi-A from Viola biflora (Yellow wood violet).